The following is a 277-amino-acid chain: Polyamine aminopropyltransferase (277 aa).

A PABS domain is found at 2–235; that stretch reads ELWFTENQDE…SLWTFTMGSK (234 aa). Q31 provides a ligand contact to S-methyl-5'-thioadenosine. H62 and D86 together coordinate spermidine. S-methyl-5'-thioadenosine-binding positions include E106 and 137–138; that span reads DG. D155 serves as the catalytic Proton acceptor. Residue 155 to 158 participates in spermidine binding; the sequence is DSTD. P162 contributes to the S-methyl-5'-thioadenosine binding site.

The protein belongs to the spermidine/spermine synthase family. As to quaternary structure, homodimer or homotetramer.

Its subcellular location is the cytoplasm. The catalysed reaction is S-adenosyl 3-(methylsulfanyl)propylamine + putrescine = S-methyl-5'-thioadenosine + spermidine + H(+). It functions in the pathway amine and polyamine biosynthesis; spermidine biosynthesis; spermidine from putrescine: step 1/1. Catalyzes the irreversible transfer of a propylamine group from the amino donor S-adenosylmethioninamine (decarboxy-AdoMet) to putrescine (1,4-diaminobutane) to yield spermidine. This Thermoanaerobacter pseudethanolicus (strain ATCC 33223 / 39E) (Clostridium thermohydrosulfuricum) protein is Polyamine aminopropyltransferase.